The chain runs to 438 residues: Plasmalemma vesicle-associated protein (438 aa).

At 1–26 (MGLSMDRSPYARTGDQQRGCWYYLRY) the chain is on the cytoplasmic side. A helical; Signal-anchor for type II membrane protein membrane pass occupies residues 27 to 47 (FFLFVSLIQFLIILGLVLFMI). Residues 48–438 (YGNVHATTES…VVNPAAQPSG (391 aa)) are Extracellular-facing. Residues Asn82, Asn88, Asn112, and Asn150 are each glycosylated (N-linked (GlcNAc...) asparagine). Coiled coils occupy residues 140 to 160 (KQCQ…LFKL), 189 to 224 (KRQT…QSLC), and 281 to 383 (EELA…ISAL). A disordered region spans residues 391–413 (SLPAVPPRVSGPPPNPPPIDPAS). Positions 394 to 410 (AVPPRVSGPPPNPPPID) are enriched in pro residues.

As to quaternary structure, homodimer. In terms of tissue distribution, expressed in lung, kidney, spleen, heart, muscle, eye, pancreas, thyroid, thymus, submaxillary gland, prostate, epididymis, uterus and liver.

The protein localises to the cell membrane. It is found in the membrane. The protein resides in the caveola. It localises to the cytoplasm. Its subcellular location is the perinuclear region. Endothelial cell-specific membrane protein involved in the formation of the diaphragms that bridge endothelial fenestrae. It is also required for the formation of stomata of caveolae and transendothelial channels. Functions in microvascular permeability, endothelial fenestrae contributing to the passage of water and solutes and regulating transcellular versus paracellular flow in different organs. Plays a specific role in embryonic development. This is Plasmalemma vesicle-associated protein (Plvap) from Mus musculus (Mouse).